We begin with the raw amino-acid sequence, 136 residues long: Large ribosomal subunit protein bL17 (136 aa).

The protein belongs to the bacterial ribosomal protein bL17 family. As to quaternary structure, part of the 50S ribosomal subunit. Contacts protein L32.

This chain is Large ribosomal subunit protein bL17, found in Rickettsia prowazekii (strain Madrid E).